A 356-amino-acid chain; its full sequence is tRNA N6-adenosine threonylcarbamoyltransferase (356 aa).

The Fe cation site is built by histidine 115 and histidine 119. Substrate-binding positions include 137 to 141 (LVSGG), aspartate 170, glycine 183, and asparagine 280. Aspartate 308 is a binding site for Fe cation.

This sequence belongs to the KAE1 / TsaD family. The cofactor is Fe(2+).

It localises to the cytoplasm. It catalyses the reaction L-threonylcarbamoyladenylate + adenosine(37) in tRNA = N(6)-L-threonylcarbamoyladenosine(37) in tRNA + AMP + H(+). In terms of biological role, required for the formation of a threonylcarbamoyl group on adenosine at position 37 (t(6)A37) in tRNAs that read codons beginning with adenine. Is involved in the transfer of the threonylcarbamoyl moiety of threonylcarbamoyl-AMP (TC-AMP) to the N6 group of A37, together with TsaE and TsaB. TsaD likely plays a direct catalytic role in this reaction. In Paracoccus denitrificans (strain Pd 1222), this protein is tRNA N6-adenosine threonylcarbamoyltransferase.